A 594-amino-acid chain; its full sequence is Alanine--tRNA ligase (594 aa).

The Zn(2+) site is built by H456, H460, C558, and H562.

It belongs to the class-II aminoacyl-tRNA synthetase family. It depends on Zn(2+) as a cofactor.

The protein localises to the cytoplasm. The catalysed reaction is tRNA(Ala) + L-alanine + ATP = L-alanyl-tRNA(Ala) + AMP + diphosphate. Functionally, catalyzes the attachment of alanine to tRNA(Ala) in a two-step reaction: alanine is first activated by ATP to form Ala-AMP and then transferred to the acceptor end of tRNA(Ala). Also edits incorrectly charged Ser-tRNA(Ala) and Gly-tRNA(Ala) via its editing domain. This is Alanine--tRNA ligase (alaS) from Borreliella afzelii (strain PKo) (Borrelia afzelii).